A 144-amino-acid polypeptide reads, in one-letter code: Small ribosomal subunit protein uS9 (144 aa).

T2 is subject to N-acetylthreonine. Residues 124-144 (RRESKKFGGPGARARYQKSYR) form a disordered region.

Belongs to the universal ribosomal protein uS9 family.

This Caenorhabditis elegans protein is Small ribosomal subunit protein uS9 (rps-16).